We begin with the raw amino-acid sequence, 86 residues long: Small ribosomal subunit protein uS15 (86 aa).

Residues 1–22 (MSIDTQKVIEDNKRSSADTGSP) are disordered. Residues 7-16 (KVIEDNKRSS) show a composition bias toward basic and acidic residues.

Belongs to the universal ribosomal protein uS15 family. As to quaternary structure, part of the 30S ribosomal subunit. Forms a bridge to the 50S subunit in the 70S ribosome, contacting the 23S rRNA.

In terms of biological role, one of the primary rRNA binding proteins, it binds directly to 16S rRNA where it helps nucleate assembly of the platform of the 30S subunit by binding and bridging several RNA helices of the 16S rRNA. Functionally, forms an intersubunit bridge (bridge B4) with the 23S rRNA of the 50S subunit in the ribosome. The protein is Small ribosomal subunit protein uS15 of Stenotrophomonas maltophilia (strain R551-3).